Reading from the N-terminus, the 275-residue chain is Activator of basal transcription 1 (275 aa).

Met1 is modified (N-acetylmethionine). 2 stretches are compositionally biased toward acidic residues: residues 1 to 10 and 25 to 34; these read MEVEGLELDT and AEEEQEESED. The segment at 1–39 is disordered; it reads MEVEGLELDTAELGPLEGSHQKLEAEEEQEESEDAAGGS. Positions 46 to 145 constitute an RRM domain; the sequence is GIVYLGHIPP…RRRSPFRYDL (100 aa). Positions 164–194 form a coiled coil; the sequence is AFERQVRRQRLRAEVAQAKRETDFYLRSVER. Residues 200 to 275 are disordered; it reads AADGDSTRPN…RGNSSPARNS (76 aa). The segment covering 262–275 has biased composition (polar residues); it reads PSESRGNSSPARNS.

Belongs to the ESF2/ABP1 family. Interacts with ESF1/ABTAP. Interacts with IGHMBP2.

It localises to the nucleus. The protein resides in the nucleolus. In terms of biological role, could be a novel TATA-binding protein (TBP) which can function as a basal transcription activator. Can act as a regulator of basal transcription for class II genes. The polypeptide is Activator of basal transcription 1 (ABT1) (Bos taurus (Bovine)).